We begin with the raw amino-acid sequence, 196 residues long: Rac-like GTP-binding protein RAC13 (196 aa).

A GTP-binding site is contributed by 13–20 (GDGAVGKT). The Effector region signature appears at 35–43 (YVPTVFDNF). Residues 60–64 (DTAGQ) and 118–121 (TKLD) each bind GTP. At Cys-193 the chain carries Cysteine methyl ester. Cys-193 is lipidated: S-geranylgeranyl cysteine. Positions 194–196 (AFL) are cleaved as a propeptide — removed in mature form.

It belongs to the small GTPase superfamily. Rho family.

It localises to the cytoplasm. The protein localises to the membrane. Could participate in a signal transduction pathway that controls cytoskeletal organization. Functionally, inactive GDP-bound Rho GTPases reside in the cytosol, are found in a complex with Rho GDP-dissociation inhibitors (Rho GDIs), and are released from the GDI protein in order to translocate to membranes upon activation. The protein is Rac-like GTP-binding protein RAC13 (RAC13) of Gossypium hirsutum (Upland cotton).